The sequence spans 364 residues: Geranylgeranyl pyrophosphate synthase janG (364 aa).

K83, R86, and H115 together coordinate isopentenyl diphosphate. 2 residues coordinate Mg(2+): D122 and D126. Residue R131 coordinates dimethylallyl diphosphate. R132 contributes to the isopentenyl diphosphate binding site. Dimethylallyl diphosphate is bound by residues K209, T210, and Q243. Residue D246 coordinates Mg(2+). Positions 250, 260, and 270 each coordinate dimethylallyl diphosphate.

It belongs to the FPP/GGPP synthase family. Mg(2+) is required as a cofactor.

The enzyme catalyses isopentenyl diphosphate + dimethylallyl diphosphate = (2E)-geranyl diphosphate + diphosphate. It carries out the reaction isopentenyl diphosphate + (2E)-geranyl diphosphate = (2E,6E)-farnesyl diphosphate + diphosphate. It catalyses the reaction isopentenyl diphosphate + (2E,6E)-farnesyl diphosphate = (2E,6E,10E)-geranylgeranyl diphosphate + diphosphate. It functions in the pathway secondary metabolite biosynthesis. Geranylgeranyl pyrophosphate synthase; part of the gene cluster that mediates the biosynthesis of the indole diterpenes janthitremanes such as shearinine K or shearinine A. The geranylgeranyl diphosphate (GGPP) synthase janG catalyzes the first step in janthitremane biosynthesis via conversion of farnesyl pyrophosphate and isopentyl pyrophosphate into geranylgeranyl pyrophosphate (GGPP). Condensation of indole-3-glycerol phosphate with GGPP by the prenyl transferase janC then forms 3-geranylgeranylindole (3-GGI). Epoxidation by the FAD-dependent monooxygenase janM leads to a epoxidized-GGI that is substrate of the terpene cyclase janB for cyclization to yield paspaline. Paspaline is subsequently converted to 13-desoxypaspaline by the cytochrome P450 monooxygenase janP, via beta-PC-M6 in a series of alpha-face oxidations. The cytochrome P450 monooxygenase janQ is proposed to carry out sequential beta-face oxidation steps at C-7 and C-13 of 13-desoxypaspaline to form paspalicine and paspalinine respectively. The indole diterpene prenyltransferase janD may then convert paspalinine into shearinine K which is substrate of janO and/or additional enzymes for oxidation and cyclization to generate shearinine A. This Penicillium janthinellum (Penicillium vitale) protein is Geranylgeranyl pyrophosphate synthase janG.